The sequence spans 374 residues: DNA replication and repair protein RecF (374 aa).

30–37 lines the ATP pocket; that stretch reads GPNAQGKT.

Belongs to the RecF family.

It is found in the cytoplasm. In terms of biological role, the RecF protein is involved in DNA metabolism; it is required for DNA replication and normal SOS inducibility. RecF binds preferentially to single-stranded, linear DNA. It also seems to bind ATP. The chain is DNA replication and repair protein RecF from Lactobacillus johnsonii (strain CNCM I-12250 / La1 / NCC 533).